The following is a 228-amino-acid chain: Demethylmenaquinone methyltransferase (228 aa).

Residues Thr-62, Asp-80, 100 to 101 (DA), and Ser-117 contribute to the S-adenosyl-L-methionine site.

Belongs to the class I-like SAM-binding methyltransferase superfamily. MenG/UbiE family.

The enzyme catalyses a 2-demethylmenaquinol + S-adenosyl-L-methionine = a menaquinol + S-adenosyl-L-homocysteine + H(+). Its pathway is quinol/quinone metabolism; menaquinone biosynthesis; menaquinol from 1,4-dihydroxy-2-naphthoate: step 2/2. In terms of biological role, methyltransferase required for the conversion of demethylmenaquinol (DMKH2) to menaquinol (MKH2). This chain is Demethylmenaquinone methyltransferase, found in Mycolicibacterium vanbaalenii (strain DSM 7251 / JCM 13017 / BCRC 16820 / KCTC 9966 / NRRL B-24157 / PYR-1) (Mycobacterium vanbaalenii).